The following is a 305-amino-acid chain: Protein hrde-2 (305 aa).

Disordered stretches follow at residues 211 to 233 (AEMV…PVPA) and 267 to 305 (EMSN…EYCQ). Residues 215–227 (PSNTTGSSGSPMS) show a composition bias toward polar residues. The segment covering 268–287 (MSNDEYSPDESENDENEYDY) has biased composition (acidic residues). Residues 289–305 (NAARYDDGYDEGHEYCQ) are compositionally biased toward basic and acidic residues.

Expressed throughout the male and female germline.

The protein resides in the nucleus. In terms of biological role, plays a role in germline RNA interference (RNAi), and in particular is required for piwi-interacting RNA (piRNA) gene silencing. Facilitates the binding of the argonaut protein hrde-1 to small interfering RNAs (siRNAs) targets that are required for transgenerational epigenetic inheritance and germline immortality. The sequence is that of Protein hrde-2 from Caenorhabditis elegans.